The sequence spans 75 residues: Exodeoxyribonuclease 7 small subunit (75 aa).

This sequence belongs to the XseB family. Heterooligomer composed of large and small subunits.

The protein resides in the cytoplasm. It catalyses the reaction Exonucleolytic cleavage in either 5'- to 3'- or 3'- to 5'-direction to yield nucleoside 5'-phosphates.. Its function is as follows. Bidirectionally degrades single-stranded DNA into large acid-insoluble oligonucleotides, which are then degraded further into small acid-soluble oligonucleotides. This chain is Exodeoxyribonuclease 7 small subunit, found in Caldanaerobacter subterraneus subsp. tengcongensis (strain DSM 15242 / JCM 11007 / NBRC 100824 / MB4) (Thermoanaerobacter tengcongensis).